The sequence spans 704 residues: Fibulin-1 (704 aa).

The signal sequence occupies residues 1–25 (MDKLRGARPLRLLLLLLALLPALRG). Intrachain disulfides connect Cys33/Cys59, Cys34/Cys66, Cys47/Cys67, Cys76/Cys107, Cys89/Cys108, Cys110/Cys134, Cys111/Cys141, Cys124/Cys142, Cys181/Cys191, Cys187/Cys200, Cys202/Cys215, Cys221/Cys234, Cys228/Cys243, Cys249/Cys261, Cys267/Cys280, Cys274/Cys289, Cys295/Cys307, Cys313/Cys326, Cys320/Cys335, Cys342/Cys355, Cys361/Cys374, Cys368/Cys383, Cys385/Cys398, Cys404/Cys416, Cys412/Cys425, Cys427/Cys440, Cys446/Cys455, Cys451/Cys464, Cys466/Cys480, Cys486/Cys499, Cys495/Cys508, Cys510/Cys524, Cys530/Cys543, Cys537/Cys552, and Cys557/Cys578. 3 Anaphylatoxin-like domains span residues 33–74 (CCDK…LEEH), 75–109 (YCSDGIEFASVHEECDSHNGENSTCEAEYFKKCCY), and 110–142 (CCLLGKTAQVQGQSCEPNLKIGYQCGIVFRACC). Asn96 is a glycosylation site (N-linked (GlcNAc...) asparagine). The region spanning 177-216 (LHDGCRGGGPCSQQCRDTGSSYVCSCFVGYQLQPDGVNCE) is the EGF-like 1 domain. Residues 217 to 262 (DINECITGTHSCGIGQTCVNTLGSFRCQRDTSCGTGYELTDDSRCK) enclose the EGF-like 2; calcium-binding domain. In terms of domain architecture, EGF-like 3; calcium-binding spans 263–308 (DIDECETGTHNCPPDFICQNTPGSFRCRPKLQCMNGFIQDALGNCI). The EGF-like 4; calcium-binding domain maps to 309–356 (DINECLSTNMPCPAGQICINTDGSYTCQRISPSCGRGYHLNEDGTRCV). Residues 357–399 (DVDECSSSDQPCGEGHVCINGPGNYRCECKSGYSFDVISRTCI) enclose the EGF-like 5; calcium-binding domain. The self-association and FN1-binding stretch occupies residues 357–441 (DVDECSSSDQ…KLSSDGRSCE (85 aa)). Residues 400 to 441 (DINECRRYPGRLCAHKCENTPGSYYCTCTMGFKLSSDGRSCE) enclose the EGF-like 6; calcium-binding domain. In terms of domain architecture, EGF-like 7; calcium-binding spans 442-481 (DLNECESSPCSQECANVYGSYQCYCRRGFQLSDIDGISCE). An EGF-like 8; calcium-binding domain is found at 482–525 (DIDECALPTGGHICSFRCINIPGSFQCTCPSTGYRLAPNARNCQ). Residues 526–579 (DIDECVAETHNCSFNETCFNIQGGFRCLSLECPENYRKSGDTVRLEKTDTIRCI) enclose the EGF-like 9; calcium-binding domain. Asn536 and Asn540 each carry an N-linked (GlcNAc...) asparagine glycan.

The protein belongs to the fibulin family. As to quaternary structure, homomultimerizes and interacts with various extracellular matrix components.

It localises to the secreted. The protein resides in the extracellular space. The protein localises to the extracellular matrix. Its function is as follows. Incorporated into fibronectin-containing matrix fibers. May play a role in cell adhesion and migration along protein fibers within the extracellular matrix (ECM). Could be important for certain developmental processes and contribute to the supramolecular organization of ECM architecture, in particular to those of basement membranes. This Gallus gallus (Chicken) protein is Fibulin-1 (FBLN1).